Reading from the N-terminus, the 276-residue chain is 4-deoxy-L-threo-5-hexosulose-uronate ketol-isomerase (276 aa).

Residues histidine 194, histidine 196, glutamate 201, and histidine 243 each contribute to the Zn(2+) site.

It belongs to the KduI family. Requires Zn(2+) as cofactor.

The catalysed reaction is 5-dehydro-4-deoxy-D-glucuronate = 3-deoxy-D-glycero-2,5-hexodiulosonate. It participates in glycan metabolism; pectin degradation; 2-dehydro-3-deoxy-D-gluconate from pectin: step 4/5. Its function is as follows. Catalyzes the isomerization of 5-dehydro-4-deoxy-D-glucuronate to 3-deoxy-D-glycero-2,5-hexodiulosonate. This is 4-deoxy-L-threo-5-hexosulose-uronate ketol-isomerase from Caldicellulosiruptor bescii (strain ATCC BAA-1888 / DSM 6725 / KCTC 15123 / Z-1320) (Anaerocellum thermophilum).